The chain runs to 102 residues: Large ribosomal subunit protein uL24 (102 aa).

The interval 1–22 (MHVKKGDTVQVMSGKDKGKQGV) is disordered.

The protein belongs to the universal ribosomal protein uL24 family. Part of the 50S ribosomal subunit.

In terms of biological role, one of two assembly initiator proteins, it binds directly to the 5'-end of the 23S rRNA, where it nucleates assembly of the 50S subunit. Its function is as follows. One of the proteins that surrounds the polypeptide exit tunnel on the outside of the subunit. The chain is Large ribosomal subunit protein uL24 from Exiguobacterium sp. (strain ATCC BAA-1283 / AT1b).